The following is a 67-amino-acid chain: Large ribosomal subunit protein bL35 (67 aa).

This sequence belongs to the bacterial ribosomal protein bL35 family.

This Agrobacterium fabrum (strain C58 / ATCC 33970) (Agrobacterium tumefaciens (strain C58)) protein is Large ribosomal subunit protein bL35.